We begin with the raw amino-acid sequence, 141 residues long: Large ribosomal subunit protein uL11 (141 aa).

It belongs to the universal ribosomal protein uL11 family. Part of the ribosomal stalk of the 50S ribosomal subunit. Interacts with L10 and the large rRNA to form the base of the stalk. L10 forms an elongated spine to which L12 dimers bind in a sequential fashion forming a multimeric L10(L12)X complex. Post-translationally, one or more lysine residues are methylated.

Functionally, forms part of the ribosomal stalk which helps the ribosome interact with GTP-bound translation factors. The sequence is that of Large ribosomal subunit protein uL11 from Fusobacterium nucleatum subsp. nucleatum (strain ATCC 25586 / DSM 15643 / BCRC 10681 / CIP 101130 / JCM 8532 / KCTC 2640 / LMG 13131 / VPI 4355).